Consider the following 247-residue polypeptide: uncharacterized protein (247 aa).

The first 35 residues, 1-35 (MWGPGVTAEGLSVAPAPPPLLPLLLLLALALVAPS), serve as a signal peptide directing secretion. Asn-57 carries an N-linked (GlcNAc...) asparagine glycan. A helical membrane pass occupies residues 82-102 (LSGLLILLVLFAIGYFLQRII). The disordered stretch occupies residues 109-179 (YPRGQARPGQ…GGRSDPSCAS (71 aa)). Over residues 160–172 (SGGGGRGRGGGGR) the composition is skewed to gly residues.

It localises to the membrane. This is an uncharacterized protein from Homo sapiens (Human).